The sequence spans 1058 residues: MIKEITAKYNAEQIEKKVTQFWEDSDAYRKTRERRKTGKRLFFVDGPPYTTGHIHLGTAWNKIIKDTILRYYSMNNRYILERPGWDMHGLPIEVRVEGVLGFKSKKDIESFGVENFIEKCKEFAITQKQAMTEQFQRLGVWMQWPEPYMTLKDDYIEAAWWTLKQAHEKDLLEVGKRSVNWCPRCETAIADSEVEYSERTDPSIYVKFKVKGEENTFIVIWTTTPWTIPANVAVAVHPAYEYSKFRAIRQDGSEEILIAATELIKNVLKQGRYADFKVLETMLGEELTKLEYESPVGDLVPIQNEIKHGVYLADFVTVENTGCVHIAPGHGMDDFNLGVKHKLPILCPVGSNGAYTEEAGEYAGKNVREANPIVIEDLKARNRLLAEGTVTHRYGHCWRCKTPIIYLATEQWFLKITEIKEKMLEEIDAVDWYPDWAGSARFRTWVEGARDWCISRQRYWGIPLPVWKCKKCGKLEVIGTKAELLEKAGLSGDIELHRPYVDRVTVPCECGGEKKRVEDVFDVWFDSAVASWATLKFPQTHDQFDEWWPADFVTEGHDQTRGWFYSQLGASMVGFGRAPYKSVLMHGFTLDAGGKKMSKSLGNVVSPLDIIDRLGADTLRAYVLSSSAPWEDLKYNLEEVETVHRSINILWNVFRFPLPYMALDNFDPMQVSLDSVKDALREEDRWILSRAQSVIKAVNEAMSGYLLHKAVREILEFALEDLSRWYIQLIRPRTWTEADDPDKLAAYCVLYEVYVTITKLISPFMPYLAEEMYQNLIRNVDPNAPESVHMCDWPKVNDTYLDPELEVAMDTVRSIVEAASNARQKAGRKLRWPVSRIIVSPESEAAAKAVNRLGSVLMDQTNSKAIVLTGVGKSWDELGLEVIPDPGKIGPVFKKDAGRVIPALQKVEGFTLKKAFAETGEFELTLADGTTVPVTSGMANFKETLPEGTASAESDAGLVYVDANLTPELEAEGYAREVIRRLQDMRKELDLVVDENIRVSVRIEAEKVLALVETLKDLIAEEVRADVFDLGSSIEVSGTLVKDWDVEGTAMKMGIAKK.

The short motif at 48-58 (PYTTGHIHLGT) is the 'HIGH' region element. The 'KMSKS' region signature appears at 596–600 (KMSKS). Residue K599 participates in ATP binding.

The protein belongs to the class-I aminoacyl-tRNA synthetase family. IleS type 2 subfamily. In terms of assembly, monomer. Requires Zn(2+) as cofactor.

It is found in the cytoplasm. It catalyses the reaction tRNA(Ile) + L-isoleucine + ATP = L-isoleucyl-tRNA(Ile) + AMP + diphosphate. Functionally, catalyzes the attachment of isoleucine to tRNA(Ile). As IleRS can inadvertently accommodate and process structurally similar amino acids such as valine, to avoid such errors it has two additional distinct tRNA(Ile)-dependent editing activities. One activity is designated as 'pretransfer' editing and involves the hydrolysis of activated Val-AMP. The other activity is designated 'posttransfer' editing and involves deacylation of mischarged Val-tRNA(Ile). The polypeptide is Isoleucine--tRNA ligase (Methanosarcina acetivorans (strain ATCC 35395 / DSM 2834 / JCM 12185 / C2A)).